The chain runs to 200 residues: Holliday junction branch migration complex subunit RuvA (200 aa).

The domain I stretch occupies residues 1 to 64 (MIAKLKGLLD…ENDMRLLGFA (64 aa)). The segment at 65-143 (EASERDWFRL…ALPSAPGGAA (79 aa)) is domain II. The flexible linker stretch occupies residues 144-154 (MAANPAGGASA). Residues 154 to 200 (ADAVSALENLGFKPAIAARAVATAQGELGEGASESELIRVALKRAAG) form a domain III region.

The protein belongs to the RuvA family. Homotetramer. Forms an RuvA(8)-RuvB(12)-Holliday junction (HJ) complex. HJ DNA is sandwiched between 2 RuvA tetramers; dsDNA enters through RuvA and exits via RuvB. An RuvB hexamer assembles on each DNA strand where it exits the tetramer. Each RuvB hexamer is contacted by two RuvA subunits (via domain III) on 2 adjacent RuvB subunits; this complex drives branch migration. In the full resolvosome a probable DNA-RuvA(4)-RuvB(12)-RuvC(2) complex forms which resolves the HJ.

The protein resides in the cytoplasm. The RuvA-RuvB-RuvC complex processes Holliday junction (HJ) DNA during genetic recombination and DNA repair, while the RuvA-RuvB complex plays an important role in the rescue of blocked DNA replication forks via replication fork reversal (RFR). RuvA specifically binds to HJ cruciform DNA, conferring on it an open structure. The RuvB hexamer acts as an ATP-dependent pump, pulling dsDNA into and through the RuvAB complex. HJ branch migration allows RuvC to scan DNA until it finds its consensus sequence, where it cleaves and resolves the cruciform DNA. In Erythrobacter litoralis (strain HTCC2594), this protein is Holliday junction branch migration complex subunit RuvA.